The chain runs to 29 residues: Dermaseptin-S5 (29 aa).

The protein belongs to the frog skin active peptide (FSAP) family. Dermaseptin subfamily. Expressed by the skin glands.

The protein resides in the secreted. Functionally, potent antimicrobial peptide with activity against bacteria and protozoa. Also has activity against fungi. Probably acts by disturbing membrane functions with its amphipathic structure. In Phyllomedusa sauvagei (Sauvage's leaf frog), this protein is Dermaseptin-S5.